We begin with the raw amino-acid sequence, 129 residues long: HTH-type transcriptional regulator GlnR (129 aa).

The 69-residue stretch at 10–78 (LFPIGIVMDL…MAGIKQVLLM (69 aa)) folds into the HTH merR-type domain. Positions 13-32 (IGIVMDLTQLSARQIRYYEE) form a DNA-binding region, H-T-H motif.

As to quaternary structure, homodimer under conditions of nitrogen excess. Monomer under conditions of nitrogen-limited. Interacts with feedback-inhibited GlnA in order to stabilizes GlnR-DNA complex.

With respect to regulation, under conditions of nitrogen excess, the DNA binding activity of GlnR is activated by a transient interaction with feedback-inhibited GlnA. Under conditions of nitrogen-limited, GlnR is autoinhibited by its C-terminal region. In terms of biological role, transcription repressor during nitrogen excess. On the contrary of the MerR members, which require longer DNA sites for high-affinity binding, GlnR requires a DNA sequence of 17 nucleotides as minimal binding site. The chain is HTH-type transcriptional regulator GlnR from Bacillus anthracis.